Reading from the N-terminus, the 361-residue chain is G2/mitotic-specific cyclin-B (361 aa).

It belongs to the cyclin family. Cyclin AB subfamily.

In terms of biological role, essential for the control of the cell cycle at the G2/M (mitosis) transition. Interacts with the CDC2 protein kinase to form MPF. G2/M cyclins accumulate steadily during G2 and are abruptly destroyed at mitosis. This chain is G2/mitotic-specific cyclin-B, found in Hydra vulgaris (Hydra).